The primary structure comprises 201 residues: ATP-dependent Clp protease proteolytic subunit (201 aa).

S97 serves as the catalytic Nucleophile. The active site involves H122.

This sequence belongs to the peptidase S14 family. As to quaternary structure, fourteen ClpP subunits assemble into 2 heptameric rings which stack back to back to give a disk-like structure with a central cavity, resembling the structure of eukaryotic proteasomes.

The protein localises to the cytoplasm. It carries out the reaction Hydrolysis of proteins to small peptides in the presence of ATP and magnesium. alpha-casein is the usual test substrate. In the absence of ATP, only oligopeptides shorter than five residues are hydrolyzed (such as succinyl-Leu-Tyr-|-NHMec, and Leu-Tyr-Leu-|-Tyr-Trp, in which cleavage of the -Tyr-|-Leu- and -Tyr-|-Trp bonds also occurs).. In terms of biological role, cleaves peptides in various proteins in a process that requires ATP hydrolysis. Has a chymotrypsin-like activity. Plays a major role in the degradation of misfolded proteins. The chain is ATP-dependent Clp protease proteolytic subunit from Nitratidesulfovibrio vulgaris (strain DSM 19637 / Miyazaki F) (Desulfovibrio vulgaris).